Reading from the N-terminus, the 177-residue chain is ATP synthase subunit b, chloroplastic (177 aa).

A helical transmembrane segment spans residues 22-42; that stretch reads ILETNIINLAAVVGIVVFFVG.

It belongs to the ATPase B chain family. F-type ATPases have 2 components, F(1) - the catalytic core - and F(0) - the membrane proton channel. F(1) has five subunits: alpha(3), beta(3), gamma(1), delta(1), epsilon(1). F(0) has four main subunits: a(1), b(1), b'(1) and c(10-14). The alpha and beta chains form an alternating ring which encloses part of the gamma chain. F(1) is attached to F(0) by a central stalk formed by the gamma and epsilon chains, while a peripheral stalk is formed by the delta, b and b' chains.

The protein resides in the plastid. It localises to the chloroplast thylakoid membrane. Functionally, f(1)F(0) ATP synthase produces ATP from ADP in the presence of a proton or sodium gradient. F-type ATPases consist of two structural domains, F(1) containing the extramembraneous catalytic core and F(0) containing the membrane proton channel, linked together by a central stalk and a peripheral stalk. During catalysis, ATP synthesis in the catalytic domain of F(1) is coupled via a rotary mechanism of the central stalk subunits to proton translocation. Its function is as follows. Component of the F(0) channel, it forms part of the peripheral stalk, linking F(1) to F(0). This Oedogonium cardiacum (Filamentous green alga) protein is ATP synthase subunit b, chloroplastic.